A 468-amino-acid chain; its full sequence is F-box/LRR-repeat protein At4g14096 (468 aa).

Residues 7–60 (RDIISSLPEAISCHILSFLPTKEAASTSVLSKKWRYLFAFVPNLDLDESVYLNP) enclose the F-box domain. LRR repeat units lie at residues 114–136 (VSDLDLHVYMETEFVFPSEMFLS), 138–167 (TLVRLKLMLYPLLEFEDVYLPKLKTLYIDS), 169–194 (YFEKYGIGLTKLLSGCPILEDLVLDD), 216–241 (STQVRDEFPKSVSIDTPNLVYLKFTD), 292–323 (TLYLSSNTLQVLTYSCDAIPIFNNLTHLTIES), and 324–349 (NPEVGWQSLPGLLKNSPNLETLIFQG).

This Arabidopsis thaliana (Mouse-ear cress) protein is F-box/LRR-repeat protein At4g14096.